The sequence spans 293 residues: Ribonuclease P/MRP protein subunit RPP1 (293 aa).

This sequence belongs to the eukaryotic/archaeal RNase P protein component 3 family. In terms of assembly, component of nuclear RNase P and RNase MRP complexes. RNase P consists of an RNA moiety and at least 9 protein subunits including POP1, POP3, POP4, POP5, POP6, POP7, POP8, RPP1 and RPR2. RNase MRP complex consists of an RNA moiety and at least 10 protein subunits including POP1, POP3, POP4, POP5, POP6, POP7, POP8, RMP1, RPP1 and SNM1, many of which are shared with the RNase P complex.

It localises to the nucleus. The catalysed reaction is Endonucleolytic cleavage of RNA, removing 5'-extranucleotides from tRNA precursor.. Component of ribonuclease P, a protein complex that generates mature tRNA molecules by cleaving their 5'-ends. Also a component of RNase MRP, which cleaves pre-rRNA sequences. The chain is Ribonuclease P/MRP protein subunit RPP1 (RPP1) from Saccharomyces cerevisiae (strain ATCC 204508 / S288c) (Baker's yeast).